The primary structure comprises 398 residues: Bifunctional enzyme IspD/IspF (398 aa).

The 2-C-methyl-D-erythritol 4-phosphate cytidylyltransferase stretch occupies residues 1–234 (MAKSQRTAVV…ARLAAQLGDI (234 aa)). The 2-C-methyl-D-erythritol 2,4-cyclodiphosphate synthase stretch occupies residues 235-398 (RTGTGYDVHA…LPFNEKTWSV (164 aa)). A divalent metal cation contacts are provided by Asp-241 and His-243. Residues 241 to 243 (DVH) and 267 to 268 (HS) each bind 4-CDP-2-C-methyl-D-erythritol 2-phosphate. His-275 lines the a divalent metal cation pocket. Residues 289–291 (DIG), 365–368 (TTSE), Phe-372, and Arg-375 each bind 4-CDP-2-C-methyl-D-erythritol 2-phosphate.

In the N-terminal section; belongs to the IspD/TarI cytidylyltransferase family. IspD subfamily. This sequence in the C-terminal section; belongs to the IspF family. A divalent metal cation is required as a cofactor.

It catalyses the reaction 2-C-methyl-D-erythritol 4-phosphate + CTP + H(+) = 4-CDP-2-C-methyl-D-erythritol + diphosphate. The enzyme catalyses 4-CDP-2-C-methyl-D-erythritol 2-phosphate = 2-C-methyl-D-erythritol 2,4-cyclic diphosphate + CMP. It functions in the pathway isoprenoid biosynthesis; isopentenyl diphosphate biosynthesis via DXP pathway; isopentenyl diphosphate from 1-deoxy-D-xylulose 5-phosphate: step 2/6. Its pathway is isoprenoid biosynthesis; isopentenyl diphosphate biosynthesis via DXP pathway; isopentenyl diphosphate from 1-deoxy-D-xylulose 5-phosphate: step 4/6. Bifunctional enzyme that catalyzes the formation of 4-diphosphocytidyl-2-C-methyl-D-erythritol from CTP and 2-C-methyl-D-erythritol 4-phosphate (MEP) (IspD), and catalyzes the conversion of 4-diphosphocytidyl-2-C-methyl-D-erythritol 2-phosphate (CDP-ME2P) to 2-C-methyl-D-erythritol 2,4-cyclodiphosphate (ME-CPP) with a corresponding release of cytidine 5-monophosphate (CMP) (IspF). This Bradyrhizobium diazoefficiens (strain JCM 10833 / BCRC 13528 / IAM 13628 / NBRC 14792 / USDA 110) protein is Bifunctional enzyme IspD/IspF.